Consider the following 319-residue polypeptide: Proline hydroxylase buaE (319 aa).

Residues 168 to 280 (NSSELRLNHY…RYSIAYFGKP (113 aa)) form the Fe2OG dioxygenase domain. Residues His195, Asp197, and His255 each contribute to the Fe cation site. Arg271 provides a ligand contact to 2-oxoglutarate.

This sequence belongs to the iron/ascorbate-dependent oxidoreductase family. Requires Fe(2+) as cofactor.

It functions in the pathway mycotoxin biosynthesis. Its function is as follows. Proline hydroxylase; part of the gene cluster that mediates the biosynthesis of burnettramic acids, an unusual class of bolaamphiphilic pyrrolizidinediones that display potent antibacterial, antifungal, and cytotoxic activities. The first step of the biosynthesis of burnettramic acids is the hydroxylation of proline by the proline hydroxylase buaE to generate 4-hydroxyproline. The PKS-NRPS buaA and trans-enoyl reductase buaC construct the highly reduced polyketide chain, and the condensation (C) domain of buaA then catalyzes the amide bond formation with the activated 4-hydroxyproline. This is followed by the R domain releasing the nascent polyketide-peptide directly via a Dieckmann condensation to afford a tetramic acid fused to the hydroxyproline, generating the bicyclic pyrrolidinedione moiety. The cytochrome P450 monooxygenases buaD and buaG are likely responsible for the multiple hydroxylations on the polyketide chain and its terminus, although in the heterologous context, buaD does not appear to be required. Therefore, while buaG may be a multifunctional cytochrome P450 monooxygenase, it cannot be ruled out that the two secondary alcohols on the polyketide chain could have an acetate origin. Finally, the glycosyltransferase buaB transfers beta-D-mannose to the aglycone burnettramic acid A to form burnettramic acid A. Burnettramic acid B is a minor cis-pyrrolizidine epimer of burnettramic acid A and it is likely that small amounts of it form naturally in acidic environments. In Petromyces alliaceus (Aspergillus alliaceus), this protein is Proline hydroxylase buaE.